The following is a 724-amino-acid chain: Ribosomal RNA large subunit methyltransferase K/L (724 aa).

A THUMP domain is found at Asp42 to Leu153.

Belongs to the methyltransferase superfamily. RlmKL family.

The protein resides in the cytoplasm. The catalysed reaction is guanosine(2445) in 23S rRNA + S-adenosyl-L-methionine = N(2)-methylguanosine(2445) in 23S rRNA + S-adenosyl-L-homocysteine + H(+). It carries out the reaction guanosine(2069) in 23S rRNA + S-adenosyl-L-methionine = N(2)-methylguanosine(2069) in 23S rRNA + S-adenosyl-L-homocysteine + H(+). Functionally, specifically methylates the guanine in position 2445 (m2G2445) and the guanine in position 2069 (m7G2069) of 23S rRNA. The chain is Ribosomal RNA large subunit methyltransferase K/L from Xylella fastidiosa (strain M12).